The following is a 156-amino-acid chain: Cytochrome c-type biogenesis protein CcmE 2 (156 aa).

The Cytoplasmic portion of the chain corresponds to 1–8 (MNPQRRRR). Residues 9–29 (LWWVLALLLAGGLATTLVSMA) form a helical; Signal-anchor for type II membrane protein membrane-spanning segment. The Periplasmic portion of the chain corresponds to 30 to 156 (LQRNVAYLYT…AAANQGGALR (127 aa)). H123 and Y127 together coordinate heme. Residues 135 to 156 (KMGSAHRKHDVPAAANQGGALR) form a disordered region.

It belongs to the CcmE/CycJ family.

The protein resides in the cell inner membrane. In terms of biological role, heme chaperone required for the biogenesis of c-type cytochromes. Transiently binds heme delivered by CcmC and transfers the heme to apo-cytochromes in a process facilitated by CcmF and CcmH. The sequence is that of Cytochrome c-type biogenesis protein CcmE 2 from Xanthomonas oryzae pv. oryzae (strain MAFF 311018).